Reading from the N-terminus, the 95-residue chain is Small ribosomal subunit protein bS20c (95 aa).

The disordered stretch occupies residues 76 to 95 (NGSAKKAKLTKRLKEKKISL). Residues 80–95 (KKAKLTKRLKEKKISL) show a composition bias toward basic residues.

Belongs to the bacterial ribosomal protein bS20 family.

It localises to the plastid. The protein localises to the chloroplast. Its function is as follows. Binds directly to 16S ribosomal RNA. The sequence is that of Small ribosomal subunit protein bS20c from Guillardia theta (Cryptophyte).